Here is a 75-residue protein sequence, read N- to C-terminus: Antimicrobial peptide Meucin-49-1 (75 aa).

The first 22 residues, 1 to 22 (MNKKILLVIFIVTMLIVDEVNS), serve as a signal peptide directing secretion.

The protein belongs to the non-disulfide-bridged peptide (NDBP) superfamily. Long chain multifunctional peptide (group 2) family. Expressed by the venom gland.

The protein localises to the secreted. Antimicrobial peptide. In Mesobuthus eupeus (Lesser Asian scorpion), this protein is Antimicrobial peptide Meucin-49-1.